Here is a 107-residue protein sequence, read N- to C-terminus: High mobility group protein HMG-I/HMG-Y (107 aa).

The tract at residues 1–107 (MSESSSKSSQ…ISQESSEEEQ (107 aa)) is disordered. Position 2 is an N-acetylserine (Ser-2). Lys-7 is subject to N6-acetyllysine. Position 8 is an ADP-ribosylserine (Ser-8). Residue Ser-9 is modified to ADP-ribosylserine; alternate. Residue Ser-9 is modified to Phosphoserine; alternate. An N6-acetyllysine; alternate modification is found at Lys-15. Lys-15 participates in a covalent cross-link: Glycyl lysine isopeptide (Lys-Gly) (interchain with G-Cter in SUMO2); alternate. Basic and acidic residues predominate over residues 15–24 (KQEKDGTEKR). Positions 21 to 31 (TEKRGRGRPRK) form a DNA-binding region, a.T hook 1. Asymmetric dimethylarginine; alternate is present on Arg-26. Arg-26 carries the omega-N-methylarginine; alternate modification. At Arg-26 the chain carries Symmetric dimethylarginine; alternate. Ser-36 carries the phosphoserine; by HIPK2 and CDC2 modification. A phosphothreonine mark is found at Thr-39 and Val-42. Ser-44 and Ser-49 each carry phosphoserine. Thr-53 is modified (phosphothreonine; by HIPK2 and CDC2). Residues 53-63 (TPKRPRGRPKG) constitute a DNA-binding region (a.T hook 2). The interaction with HIPK2 stretch occupies residues 53–77 (TPKRPRGRPKGSKNKGAAKTRKTTT). Basic residues predominate over residues 55 to 74 (KRPRGRPKGSKNKGAAKTRK). Asymmetric dimethylarginine; by PRMT6; alternate is present on residues Arg-58 and Arg-60. An omega-N-methylarginine; by PRMT6; alternate mark is found at Arg-58 and Arg-60. Lys-67 is subject to Phosphothreonine. Thr-78 bears the Phosphothreonine; by HIPK2 and CDC2 mark. The segment at residues 78-89 (TPGRKPRGRPKK) is a DNA-binding region (a.T hook 3). Residues 93–107 (EEEEGISQESSEEEQ) are compositionally biased toward acidic residues. Phosphoserine is present on Ser-99. A phosphoserine; by CK mark is found at Ser-102 and Ser-103.

It belongs to the HMGA family. As to quaternary structure, interacts with HIPK2. Constitutively phosphorylated on two or three sites. Hyperphosphorylated at early stages of apoptosis, followed by dephosphorylation and methylation, which coincides with chromatin condensation. Isoforms HMG-I and HMG-Y can be phosphorylated by HIPK2. Phosphorylation of HMG-I at Ser-36, Thr-53 and Thr-78 and of HMG-Y at Thr-42 and Thr-67 by HIPK2 modulates DNA-binding affinity. Post-translationally, HMG-Y is not methylated. In terms of processing, methylation at Arg-58 is mutually exclusive with methylation at Arg-60.

Its subcellular location is the nucleus. The protein localises to the chromosome. Its function is as follows. HMG-I/Y bind preferentially to the minor groove of A+T rich regions in double-stranded DNA. It is suggested that these proteins could function in nucleosome phasing and in the 3'-end processing of mRNA transcripts. They are also involved in the transcription regulation of genes containing, or in close proximity to A+T-rich regions. The polypeptide is High mobility group protein HMG-I/HMG-Y (HMGA1) (Homo sapiens (Human)).